We begin with the raw amino-acid sequence, 193 residues long: Erythropoietin (193 aa).

Residues M1–G27 form the signal peptide. Intrachain disulfides connect C34/C188 and C56/C60. N51 is a glycosylation site (N-linked (GlcNAc...) asparagine). N65 and N110 each carry an N-linked (GlcNAc...) asparagine glycan. S153 is a glycosylation site (O-linked (GalNAc...) serine).

This sequence belongs to the EPO/TPO family. As to expression, produced by kidney or liver of adult mammals and by liver of fetal or neonatal mammals.

The protein localises to the secreted. In terms of biological role, hormone involved in the regulation of erythrocyte proliferation and differentiation and the maintenance of a physiological level of circulating erythrocyte mass. Binds to EPOR leading to EPOR dimerization and JAK2 activation thereby activating specific downstream effectors, including STAT1 and STAT3. This chain is Erythropoietin (EPO), found in Homo sapiens (Human).